The chain runs to 214 residues: Large ribosomal subunit protein uL3 (214 aa).

A disordered region spans residues 133–154; the sequence is GLGAGHGTQRKHRSPGSIGGCA.

The protein belongs to the universal ribosomal protein uL3 family. As to quaternary structure, part of the 50S ribosomal subunit. Forms a cluster with proteins L14 and L19.

One of the primary rRNA binding proteins, it binds directly near the 3'-end of the 23S rRNA, where it nucleates assembly of the 50S subunit. In Streptomyces avermitilis (strain ATCC 31267 / DSM 46492 / JCM 5070 / NBRC 14893 / NCIMB 12804 / NRRL 8165 / MA-4680), this protein is Large ribosomal subunit protein uL3.